Consider the following 349-residue polypeptide: Nitrilase, bromoxynil-specific (349 aa).

Residues 5–274 (FKAAAVQAEP…EGIVYAEIDL (270 aa)) form the CN hydrolase domain. Catalysis depends on Glu-45, which acts as the Proton acceptor. Residue Lys-127 is the Proton donor of the active site. Catalysis depends on Cys-161, which acts as the Nucleophile.

It belongs to the carbon-nitrogen hydrolase superfamily. Nitrilase family. As to quaternary structure, homodimer.

It carries out the reaction a nitrile + 2 H2O = a carboxylate + NH4(+). Its function is as follows. Specific for the herbicide bromoxynil (3,5-dibromo-4-hydroxybenzonitrile); converts it to its metabolite 3,5-dibromo-4-hydroxybenzoic acid. This Klebsiella pneumoniae subsp. ozaenae protein is Nitrilase, bromoxynil-specific (bxn).